The chain runs to 240 residues: Adenosylcobinamide-GDP ribazoletransferase (240 aa).

5 consecutive transmembrane segments (helical) span residues 31–51 (LLYY…ASHL), 57–77 (APLH…ALHL), 109–129 (IAVV…WVLV), 133–153 (VGAQ…GLFL), and 185–205 (LFCL…FAWL).

It belongs to the CobS family. Requires Mg(2+) as cofactor.

It is found in the cell inner membrane. The enzyme catalyses alpha-ribazole + adenosylcob(III)inamide-GDP = adenosylcob(III)alamin + GMP + H(+). It catalyses the reaction alpha-ribazole 5'-phosphate + adenosylcob(III)inamide-GDP = adenosylcob(III)alamin 5'-phosphate + GMP + H(+). Its pathway is cofactor biosynthesis; adenosylcobalamin biosynthesis; adenosylcobalamin from cob(II)yrinate a,c-diamide: step 7/7. Functionally, joins adenosylcobinamide-GDP and alpha-ribazole to generate adenosylcobalamin (Ado-cobalamin). Also synthesizes adenosylcobalamin 5'-phosphate from adenosylcobinamide-GDP and alpha-ribazole 5'-phosphate. The protein is Adenosylcobinamide-GDP ribazoletransferase of Pseudomonas putida (strain GB-1).